Reading from the N-terminus, the 1483-residue chain is Heme-responsive zinc finger transcription factor HAP1 (1483 aa).

The segment covering M1–S50 has biased composition (polar residues). The disordered stretch occupies residues M1–K56. Zn(2+)-binding residues include C64, C67, C74, C81, C84, and C93. A DNA-binding region (zn(2)-C6 fungal-type) is located at residues C64 to C93. The stretch at E105–S134 forms a coiled coil. Residues K126–N208 are disordered. The span at K130–S142 shows a compositional bias: low complexity. Composition is skewed to polar residues over residues Y143–F152 and T160–H176. Residues Q177–N208 show a composition bias toward low complexity. Residues K244–S444 are heme-responsive; required for HMC formation. HRM repeat units lie at residues K280 to H285, K299 to H304, K323 to H328, R347 to H352, K389 to H394, and R415 to H420. Composition is skewed to polar residues over residues S432–H447 and Q706–L734. Disordered stretches follow at residues S432–H458 and Q706–Q767. Over residues N735 to N759 the composition is skewed to low complexity. One copy of the HRM 7 repeat lies at K1192 to Q1197.

As to quaternary structure, binds DNA as a homodimer. Interacts with SRO9 and YDJ1. In the absence of heme, binds to at least four cellular proteins, including YDJ1 and SRO9, forming a high-molecular-weight complex (HMC) which results in repression of its activity and dictates its DNA-binding specificity.

The protein localises to the nucleus. Its function is as follows. Regulation of oxygen dependent gene expression. It modulates the expression of Iso-1 (CYP1) and Iso-2 (CYP3) cytochrome c. In response to heme, promotes transcription of genes encoding functions required for respiration, controlling oxidative damage and repression of anaerobic genes. Binds to the sequence 5'-CGGNNNTNNCGG-3'. In Saccharomyces cerevisiae (strain Lalvin EC1118 / Prise de mousse) (Baker's yeast), this protein is Heme-responsive zinc finger transcription factor HAP1 (HAP1).